Here is a 262-residue protein sequence, read N- to C-terminus: Apolipoprotein A-I (262 aa).

Positions 1–18 are cleaved as a signal peptide; the sequence is MKAVVLTLAVLFLTGSQA. 2 repeat units span residues 67–88 and 89–110. The interval 67–262 is 10 X approximate tandem repeats; sequence LKLLDNWDTL…DEASKKLNAQ (196 aa). Met-109 carries the post-translational modification Methionine sulfoxide. The 3; half-length repeat unit spans residues 111–121; that stretch reads KDLEEVKQKVQ. A run of 5 repeats spans residues 122 to 142, 144 to 165, 166 to 184, 185 to 206, and 207 to 227. The stretch at 228-238 is one 9; half-length repeat; that stretch reads PALEDLRQGLM. Met-238 carries the methionine sulfoxide modification. The stretch at 239-262 is repeat 10; the sequence is PVLESLKVSILAAIDEASKKLNAQ.

This sequence belongs to the apolipoprotein A1/A4/E family. As to quaternary structure, homodimer. Interacts with APOA1BP and CLU. Component of a sperm activating protein complex (SPAP), consisting of APOA1, an immunoglobulin heavy chain, an immunoglobulin light chain and albumin. Interacts with NDRG1. Interacts with SCGB3A2. Interacts with NAXE and YJEFN3. Post-translationally, glycosylated. In terms of processing, palmitoylated. Phosphorylation sites are present in the extracellular medium. Major protein of plasma HDL, also found in chylomicrons.

Its subcellular location is the secreted. Functionally, participates in the reverse transport of cholesterol from tissues to the liver for excretion by promoting cholesterol efflux from tissues and by acting as a cofactor for the lecithin cholesterol acyltransferase (LCAT). As part of the SPAP complex, activates spermatozoa motility. The chain is Apolipoprotein A-I (APOA1) from Pantholops hodgsonii (Chiru).